The primary structure comprises 517 residues: Synaptic vesicular amine transporter (517 aa).

The Cytoplasmic portion of the chain corresponds to Met-1 to Lys-20. Residues Leu-21–Val-41 form a helical membrane-spanning segment. The Extracellular portion of the chain corresponds to Pro-42 to Val-132. 3 N-linked (GlcNAc...) asparagine glycosylation sites follow: Asn-84, Asn-91, and Asn-112. A disulfide bond links Cys-120 and Cys-327. Residues Gln-133–Gly-153 traverse the membrane as a helical segment. At Leu-154–Pro-162 the chain is on the cytoplasmic side. Residues Ile-163 to Arg-183 form a helical membrane-spanning segment. Over Thr-184–Arg-192 the chain is Extracellular. A helical membrane pass occupies residues Ser-193 to Val-213. Residues Tyr-214–Asn-222 lie on the Cytoplasmic side of the membrane. Residues Ala-223–Leu-245 traverse the membrane as a helical segment. Serotonin contacts are provided by Leu-231 and Val-235. The Extracellular segment spans residues Tyr-246–Lys-251. The chain crosses the membrane as a helical span at residues Thr-252 to Gln-274. Topologically, residues Pro-275–Asp-294 are cytoplasmic. The helical transmembrane segment at Pro-295–Leu-314 threads the bilayer. The serotonin site is built by Asn-308, Ile-311, Glu-315, Phe-337, and Tyr-344. The Extracellular portion of the chain corresponds to Glu-315 to Trp-331. A helical membrane pass occupies residues Gln-332–Ala-355. Residues His-356–Arg-360 are Cytoplasmic-facing. The chain crosses the membrane as a helical span at residues Trp-361–Ala-381. Residues Lys-382 to Phe-392 are Extracellular-facing. The chain crosses the membrane as a helical span at residues Gly-393 to Val-413. Residue Asp-402 coordinates serotonin. Over Asp-414–His-417 the chain is Cytoplasmic. Residues Val-418–Ile-438 traverse the membrane as a helical segment. Tyr-436 is a serotonin binding site. At Gly-439 to Gly-443 the chain is on the extracellular side. The helical transmembrane segment at Gly-444–Leu-465 threads the bilayer. The Cytoplasmic portion of the chain corresponds to Phe-466 to Asp-517. A phosphoserine; by CK2 mark is found at Ser-514 and Ser-516.

This sequence belongs to the major facilitator superfamily. Vesicular transporter family. Interacts with SLC6A3.

The protein resides in the cytoplasmic vesicle. The protein localises to the secretory vesicle. Its subcellular location is the synaptic vesicle membrane. It localises to the secretory vesicle membrane. It is found in the cell projection. The protein resides in the axon. The protein localises to the dendrite. It carries out the reaction serotonin(in) + 2 H(+)(out) = serotonin(out) + 2 H(+)(in). The catalysed reaction is dopamine(in) + 2 H(+)(out) = dopamine(out) + 2 H(+)(in). It catalyses the reaction histamine(in) + 2 H(+)(out) = histamine(out) + 2 H(+)(in). Its activity is regulated as follows. Strongly inhibited by reserpine and tetrabenazine. Also inhibited to a lesser extent by ketanserin and fenfluramine. Reserpine and ketanserin inhibit by blocking the substrate-binding pocket. Tetrabenazine traps SLC18A2/VMAT2 in an occluded conformation and its inhibition is specific to SLC18A2/VMAT2 but not SLC18A1/VMAT1. In terms of biological role, electrogenic antiporter that exchanges one cationic monoamine with two intravesicular protons across the membrane of secretory and synaptic vesicles. Uses the electrochemical proton gradient established by the V-type proton-pump ATPase to accumulate high concentrations of monoamines inside the vesicles prior to their release via exocytosis. Transports a variety of catecholamines such as dopamine, adrenaline and noradrenaline, histamine, and indolamines such as serotonin. Regulates the transvesicular monoaminergic gradient that determines the quantal size. Mediates somatodendritic dopamine release in hippocampal neurons, likely as part of a regulated secretory pathway that integrates retrograde synaptic signals. Acts as a primary transporter for striatal dopamine loading ensuring impulse-dependent release of dopamine at the synaptic cleft. Responsible for histamine and serotonin storage and subsequent corelease from mast cell granules. This Bos taurus (Bovine) protein is Synaptic vesicular amine transporter (SLC18A2).